The following is a 418-amino-acid chain: MPMLNAQQFLNQFSLEAPLDESLYPIIRDICQEVKVHGDKALKMYNLTFDHTKTDHLEISHEQIKAAFDTLDEKTKQALQQSYERIKAYQESIKQTNQQLEESVECYEIYHPLESVGIYVPGGKASYPSTVLMTATLAQVAGVENIVVVTPPQPNGVSQEVLAACYITQVDQVFQVGGAQSIAALTYGTETIPKVDKIVGPGNQFVAYAKKYLFGQVGIDQIAGPTEIALIIDETADLDAIVYDVFAQAEHDELARTYAISEDAQVLKDLESRIAKALPNVDRYDIVSKSIANQHYLIHASNFDEACHVMNTIAPEHASIQTVNPQPYIEKVKYVGALFIGHYSPEVIGDYVAGPSHVLPTNRTARFTNGLSVNDFLTRNTVIHLSKDTFEQIADSAQHIAHVEALYNHQQSILIRQS.

Tyrosine 119, glutamine 180, and asparagine 203 together coordinate NAD(+). Residues threonine 226, glutamine 248, and histidine 251 each coordinate substrate. Zn(2+)-binding residues include glutamine 248 and histidine 251. Catalysis depends on proton acceptor residues glutamate 316 and histidine 317. 4 residues coordinate substrate: histidine 317, aspartate 350, glutamate 404, and histidine 409. Aspartate 350 is a binding site for Zn(2+). Residue histidine 409 participates in Zn(2+) binding.

This sequence belongs to the histidinol dehydrogenase family. Zn(2+) serves as cofactor.

It carries out the reaction L-histidinol + 2 NAD(+) + H2O = L-histidine + 2 NADH + 3 H(+). The protein operates within amino-acid biosynthesis; L-histidine biosynthesis; L-histidine from 5-phospho-alpha-D-ribose 1-diphosphate: step 9/9. In terms of biological role, catalyzes the sequential NAD-dependent oxidations of L-histidinol to L-histidinaldehyde and then to L-histidine. In Staphylococcus aureus (strain COL), this protein is Histidinol dehydrogenase.